The primary structure comprises 357 residues: Peptide chain release factor 1 (357 aa).

At Q234 the chain carries N5-methylglutamine. Residues 249-308 (PSGVEVSCQDEKSQHKNRSKAMRVLRSRVYEKKREEQQAEREEARRSMVGSGDRSAKIRT) are disordered. The span at 263–274 (HKNRSKAMRVLR) shows a compositional bias: basic residues. The span at 276–294 (RVYEKKREEQQAEREEARR) shows a compositional bias: basic and acidic residues.

The protein belongs to the prokaryotic/mitochondrial release factor family. In terms of processing, methylated by PrmC. Methylation increases the termination efficiency of RF1.

It localises to the cytoplasm. Its function is as follows. Peptide chain release factor 1 directs the termination of translation in response to the peptide chain termination codons UAG and UAA. The polypeptide is Peptide chain release factor 1 (Salinibacter ruber (strain DSM 13855 / M31)).